A 242-amino-acid chain; its full sequence is Segregation and condensation protein A (242 aa).

The protein belongs to the ScpA family. Component of a cohesin-like complex composed of ScpA, ScpB and the Smc homodimer, in which ScpA and ScpB bind to the head domain of Smc. The presence of the three proteins is required for the association of the complex with DNA.

Its subcellular location is the cytoplasm. Participates in chromosomal partition during cell division. May act via the formation of a condensin-like complex containing Smc and ScpB that pull DNA away from mid-cell into both cell halves. This Streptococcus pneumoniae serotype 4 (strain ATCC BAA-334 / TIGR4) protein is Segregation and condensation protein A.